Consider the following 391-residue polypeptide: GDP-mannose transporter (391 aa).

The span at 1–11 (MDDKKNEDVEM) shows a compositional bias: basic and acidic residues. Residues 1 to 28 (MDDKKNEDVEMRNFNGRSSPSQRDPFIS) form a disordered region. Topologically, residues 1-44 (MDDKKNEDVEMRNFNGRSSPSQRDPFISKPGAAKRGGSSFDLSN) are cytoplasmic. Residues 45-65 (VTNSPGISILAYCLASISMTV) form a helical membrane-spanning segment. The Lumenal portion of the chain corresponds to 66–75 (TNKYCVSGSN). Residues 76 to 96 (WNLNFFYLAIQSVVCIIAIII) form a helical membrane-spanning segment. Topologically, residues 97-115 (CKQAGLITNLAPFDTKKAK) are cytoplasmic. Residues 116-138 (TWFPISLLLVGMIYTSTKALQFL) form a helical membrane-spanning segment. The Lumenal segment spans residues 139-141 (SVP). The chain crosses the membrane as a helical span at residues 142-164 (VYTIFKNLTIIVIAYGEVLWFGG). At 165 to 170 (SVTPSA) the chain is on the cytoplasmic side. The helical transmembrane segment at 171–193 (LFSFGLMVLSSVVAAWADIQHAL) threads the bilayer. Residues 194-209 (YGGGATQTKEAADALS) lie on the Lumenal side of the membrane. A helical transmembrane segment spans residues 210–230 (TLNAGYAWMGMNVFCTAAYVL). At 231–245 (SMRKVIKKMNFKDWD) the chain is on the cytoplasmic side. A helical transmembrane segment spans residues 246 to 266 (TMFYNNLLTIPVLFVCSFVFE). N-linked (GlcNAc...) asparagine glycans are attached at residues Asn-267 and Asn-272. Residues 267–284 (NWSSENLTKNFPLETRNN) lie on the Lumenal side of the membrane. A helical membrane pass occupies residues 285–305 (LILGMIYSGLATIFISYCSAW). Residues 306 to 313 (CIRVTSST) are Cytoplasmic-facing. Residues 314 to 336 (TYSMVGALNKLPIAVSGLVFFAA) form a helical membrane-spanning segment. Residues 337 to 339 (PVT) are Lumenal-facing. A helical transmembrane segment spans residues 340 to 359 (FGSVSAIFIGFVSGIVYAWA). The Cytoplasmic segment spans residues 360-391 (KVRQNQSKGSVLPTTQPVMSASSQSNRDAAKA). Residues 369-391 (SVLPTTQPVMSASSQSNRDAAKA) form a disordered region.

It belongs to the TPT transporter family. SLC35D subfamily. Homooligomer.

The protein localises to the golgi apparatus membrane. It localises to the cytoplasmic vesicle membrane. Its subcellular location is the endoplasmic reticulum membrane. In terms of biological role, involved in the import of GDP-mannose from the cytoplasm into the Golgi lumen. This Sclerotinia sclerotiorum (strain ATCC 18683 / 1980 / Ss-1) (White mold) protein is GDP-mannose transporter (vrg4).